Reading from the N-terminus, the 498-residue chain is Glutathione synthetase large chain (498 aa).

R128 serves as a coordination point for substrate. E146 provides a ligand contact to ATP. Positions 146 and 148 each coordinate Mg(2+). Substrate-binding positions include 150 to 153 (ISVS), 233 to 235 (ERN), Q239, and 291 to 294 (RVGY). K330 contributes to the ATP binding site. Position 356 is a phosphoserine (S356). Residues 387–396 (KPQREGGGNN), Y398, 420–423 (MRYI), and E446 contribute to the ATP site. Mg(2+) is bound at residue E391. A substrate-binding site is contributed by R473. ATP contacts are provided by K475 and E481. 484 to 485 (VA) is a binding site for substrate.

It belongs to the eukaryotic GSH synthase family. As to quaternary structure, heterodimer composed of a large and a small chain. Mg(2+) serves as cofactor.

The catalysed reaction is gamma-L-glutamyl-L-cysteine + glycine + ATP = glutathione + ADP + phosphate + H(+). It functions in the pathway sulfur metabolism; glutathione biosynthesis; glutathione from L-cysteine and L-glutamate: step 2/2. The chain is Glutathione synthetase large chain (gsa1) from Schizosaccharomyces pombe (strain 972 / ATCC 24843) (Fission yeast).